The following is an 83-amino-acid chain: Bowman-Birk type seed trypsin and chymotrypsin inhibitor (83 aa).

7 cysteine pairs are disulfide-bonded: Cys18–Cys72, Cys19–Cys34, Cys22–Cys68, Cys24–Cys32, Cys42–Cys49, Cys46–Cys61, and Cys51–Cys59.

It belongs to the Bowman-Birk serine protease inhibitor family.

This Vigna unguiculata (Cowpea) protein is Bowman-Birk type seed trypsin and chymotrypsin inhibitor.